The primary structure comprises 416 residues: Glutamyl-tRNA reductase (416 aa).

Residues 49–52, S105, 110–112, and Q116 each bind substrate; these read TCNR and EPQ. C50 functions as the Nucleophile in the catalytic mechanism. Residue 185 to 190 participates in NADP(+) binding; the sequence is GAGETI.

Belongs to the glutamyl-tRNA reductase family. Homodimer.

The catalysed reaction is (S)-4-amino-5-oxopentanoate + tRNA(Glu) + NADP(+) = L-glutamyl-tRNA(Glu) + NADPH + H(+). Its pathway is porphyrin-containing compound metabolism; protoporphyrin-IX biosynthesis; 5-aminolevulinate from L-glutamyl-tRNA(Glu): step 1/2. In terms of biological role, catalyzes the NADPH-dependent reduction of glutamyl-tRNA(Glu) to glutamate 1-semialdehyde (GSA). In Shewanella piezotolerans (strain WP3 / JCM 13877), this protein is Glutamyl-tRNA reductase.